We begin with the raw amino-acid sequence, 1076 residues long: Protein EXPORTIN 1B (1076 aa).

Residues 37-103 (ADNILRDLKA…KNYISDVIVQ (67 aa)) enclose the Importin N-terminal domain. 11 HEAT repeats span residues 135–171 (AKWK…EVFD), 232–267 (IFES…LNFG), 282–319 (MNQL…FFTS), 475–514 (DTEK…SMVV), 564–601 (KFLK…KCKR), 613–650 (PFVS…AESD), 683–720 (LKEP…IFLD), 757–794 (REIL…DYAR), 799–836 (ARES…CTLE), 895–935 (ETGL…VLTD), and 943–988 (KLHV…YTTK).

The protein belongs to the exportin family. Present in mature pollen grains, unpollinated pistils, and 2-week-old seedlings.

The protein resides in the nucleus. The protein localises to the nuclear pore complex. Its subcellular location is the nucleus membrane. Its function is as follows. Receptor for the leucine-rich nuclear export signal (NES). Binds cooperatively to the NES on its target protein and to the small GTPase Ran in its active GTP-bound form. Required for the maternal-to-embryonic transition and during gametophyte development. The protein is Protein EXPORTIN 1B of Arabidopsis thaliana (Mouse-ear cress).